The following is a 461-amino-acid chain: Argininosuccinate lyase (461 aa).

It belongs to the lyase 1 family. Argininosuccinate lyase subfamily.

The protein resides in the cytoplasm. It catalyses the reaction 2-(N(omega)-L-arginino)succinate = fumarate + L-arginine. Its pathway is amino-acid biosynthesis; L-arginine biosynthesis; L-arginine from L-ornithine and carbamoyl phosphate: step 3/3. The protein is Argininosuccinate lyase of Laribacter hongkongensis (strain HLHK9).